The primary structure comprises 618 residues: Pyocin-S1 (618 aa).

This sequence belongs to the colicin/pyosin nuclease family. Purified pyocin S1 makes up a complex of the two (large and small) proteins. The large protein, but not the pyocin complex, shows in vitro DNase activity.

Causes breakdown of chromosomal DNA as well as complete inhibition of lipid synthesis in sensitive cells. The polypeptide is Pyocin-S1 (pys1) (Pseudomonas aeruginosa).